Here is a 278-residue protein sequence, read N- to C-terminus: Cytidine kinase (278 aa).

An ATP-binding site is contributed by 203–208 (TRGEKG). Asp237 (proton acceptor) is an active-site residue.

It belongs to the carbohydrate kinase PfkB family. Mg(2+) serves as cofactor.

It catalyses the reaction cytidine + ATP = CMP + ADP + H(+). Functionally, involved in nucleoside degradation. Phosphorylates cytidine to CMP. Can also act on deoxycytidine and uridine, but is most active with cytidine. ATP is the most preferred phosphate donor, but it can also use GTP, CTP or UTP. The polypeptide is Cytidine kinase (Thermococcus kodakarensis (strain ATCC BAA-918 / JCM 12380 / KOD1) (Pyrococcus kodakaraensis (strain KOD1))).